Reading from the N-terminus, the 312-residue chain is Ribosomal RNA small subunit methyltransferase H (312 aa).

S-adenosyl-L-methionine-binding positions include 35–37 (GGH), aspartate 54, phenylalanine 81, aspartate 100, and glutamine 107.

It belongs to the methyltransferase superfamily. RsmH family.

The protein localises to the cytoplasm. It carries out the reaction cytidine(1402) in 16S rRNA + S-adenosyl-L-methionine = N(4)-methylcytidine(1402) in 16S rRNA + S-adenosyl-L-homocysteine + H(+). In terms of biological role, specifically methylates the N4 position of cytidine in position 1402 (C1402) of 16S rRNA. This Campylobacter jejuni subsp. jejuni serotype O:2 (strain ATCC 700819 / NCTC 11168) protein is Ribosomal RNA small subunit methyltransferase H.